The primary structure comprises 284 residues: Bifunctional protein FolD (284 aa).

Residues 166-168 and Ile-232 contribute to the NADP(+) site; that span reads GAS.

Belongs to the tetrahydrofolate dehydrogenase/cyclohydrolase family. As to quaternary structure, homodimer.

It catalyses the reaction (6R)-5,10-methylene-5,6,7,8-tetrahydrofolate + NADP(+) = (6R)-5,10-methenyltetrahydrofolate + NADPH. It carries out the reaction (6R)-5,10-methenyltetrahydrofolate + H2O = (6R)-10-formyltetrahydrofolate + H(+). The protein operates within one-carbon metabolism; tetrahydrofolate interconversion. Its function is as follows. Catalyzes the oxidation of 5,10-methylenetetrahydrofolate to 5,10-methenyltetrahydrofolate and then the hydrolysis of 5,10-methenyltetrahydrofolate to 10-formyltetrahydrofolate. The polypeptide is Bifunctional protein FolD (Pseudomonas fluorescens (strain Pf0-1)).